The chain runs to 231 residues: Ribonuclease 3 (231 aa).

Residues 6–135 form the RNase III domain; sequence AAMLKERFGI…FVGALYLDQG (130 aa). E48 contacts Mg(2+). D52 is an active-site residue. Mg(2+) contacts are provided by D121 and E124. E124 is a catalytic residue. One can recognise a DRBM domain in the interval 161–230; the sequence is DYKTTLQEYL…ARQAYSQLQQ (70 aa). The segment at 209-231 is disordered; it reads WGHSKKEAEQSAARQAYSQLQQK. The segment covering 220–231 has biased composition (polar residues); sequence AARQAYSQLQQK.

Belongs to the ribonuclease III family. In terms of assembly, homodimer. Requires Mg(2+) as cofactor.

Its subcellular location is the cytoplasm. The enzyme catalyses Endonucleolytic cleavage to 5'-phosphomonoester.. Digests double-stranded RNA. Involved in the processing of primary rRNA transcript to yield the immediate precursors to the large and small rRNAs (23S and 16S). Processes some mRNAs, and tRNAs when they are encoded in the rRNA operon. Processes pre-crRNA and tracrRNA of type II CRISPR loci if present in the organism. The chain is Ribonuclease 3 from Lactiplantibacillus plantarum (strain ATCC BAA-793 / NCIMB 8826 / WCFS1) (Lactobacillus plantarum).